Reading from the N-terminus, the 327-residue chain is Interleukin-12 subunit beta (327 aa).

Positions 1 to 22 are cleaved as a signal peptide; sequence MHPQQLVVSWFSLVLLTSPIVA. Positions 23–106 constitute an Ig-like C2-type domain; sequence IWELEKNVYV…LSRSLLLLHK (84 aa). Cysteines 50 and 90 form a disulfide. A glycan (N-linked (GlcNAc...) asparagine) is linked at Asn-223. Residues 238–327 form the Fibronectin type-III domain; the sequence is PPKNLQLRPL…WSEWASVSCS (90 aa).

Belongs to the IL-12B family. Heterodimer with IL12A; disulfide-linked. The heterodimer is known as interleukin IL-12. Heterodimer with IL23A; disulfide-linked. The heterodimer is known as interleukin IL-23. Also secreted as a monomer. Interacts with NBR1; this interaction promotes IL-12 secretion.

It localises to the secreted. In terms of biological role, cytokine that can act as a growth factor for activated T and NK cells, enhance the lytic activity of NK/lymphokine-activated killer cells, and stimulate the production of IFN-gamma by resting PBMC. Its function is as follows. Associates with IL23A to form the IL-23 interleukin, a heterodimeric cytokine which functions in innate and adaptive immunity. IL-23 may constitute with IL-17 an acute response to infection in peripheral tissues. IL-23 binds to a heterodimeric receptor complex composed of IL12RB1 and IL23R, activates the Jak-Stat signaling cascade, stimulates memory rather than naive T-cells and promotes production of pro-inflammatory cytokines. IL-23 induces autoimmune inflammation and thus may be responsible for autoimmune inflammatory diseases and may be important for tumorigenesis. This chain is Interleukin-12 subunit beta (IL12B), found in Cervus elaphus (Red deer).